The sequence spans 506 residues: DEAD-box ATP-dependent RNA helicase CshA (506 aa).

Positions 2–30 (QNFKELGISDNTVQSLESMGFKEPTPIQK) match the Q motif motif. The Helicase ATP-binding domain maps to 33–203 (IPYALQGIDI…QQFMKSPKII (171 aa)). 46 to 53 (AQTGTGKT) contacts ATP. The short motif at 150–153 (DEAD) is the DEAD box element. The region spanning 214–375 (QIEEFYTIVK…LRPPHRKEVL (162 aa)) is the Helicase C-terminal domain. The disordered stretch occupies residues 436–506 (EKPLSRKGRN…KGRTFADHQK (71 aa)). The span at 468–480 (KRSKGYSSKKKST) shows a compositional bias: basic residues.

The protein belongs to the DEAD box helicase family. CshA subfamily. As to quaternary structure, oligomerizes, may be a member of the RNA degradosome.

The protein resides in the cytoplasm. It carries out the reaction ATP + H2O = ADP + phosphate + H(+). DEAD-box RNA helicase possibly involved in RNA degradation. Unwinds dsRNA in both 5'- and 3'-directions, has RNA-dependent ATPase activity. The sequence is that of DEAD-box ATP-dependent RNA helicase CshA from Staphylococcus aureus (strain MW2).